Here is a 522-residue protein sequence, read N- to C-terminus: DNA-binding protein Ikaros (522 aa).

Disordered stretches follow at residues 1–48 (MEME…HNNR) and 96–115 (AKVN…YSSA). 4 C2H2-type zinc fingers span residues 125-147 (LKCD…KRSH), 153-175 (FQCT…IKLH), 181-203 (FKCH…LRTH), and 209-232 (HKCA…ERCH). The interval 379–406 (KSASSEKDGSPSHSGQDSTDTESNNEEK) is disordered. 2 C2H2-type zinc fingers span residues 468–490 (YRCE…MGCH) and 496–520 (FECN…RGEH).

Belongs to the Ikaros C2H2-type zinc-finger protein family. Expression mainly limited to thymus, spleen and pronephros. Very low expression in liver. No expression in testis, brain, eye and muscle.

The protein resides in the nucleus. Binds and activates the enhancer (delta-A element) of the CD3-delta gene. Functions in the specification and the maturation of the T-lymphocyte. Also interacts with a critical control element in the TDT (terminal deoxynucleotidyltransferase) promoter as well as with the promoters for other genes expressed during early stages of B- and T-cell development. Function is isoform-specific and is modulated by dominant-negative inactive isoforms. In Oncorhynchus mykiss (Rainbow trout), this protein is DNA-binding protein Ikaros (ikzf1).